The primary structure comprises 65 residues: Large ribosomal subunit protein bL35 (65 aa).

A compositionally biased stretch (basic residues) spans 1–15 (MPKMKTKKSASKRFQ). The disordered stretch occupies residues 1–27 (MPKMKTKKSASKRFQVRGSGSIKRGQA).

It belongs to the bacterial ribosomal protein bL35 family.

In Bordetella petrii (strain ATCC BAA-461 / DSM 12804 / CCUG 43448), this protein is Large ribosomal subunit protein bL35.